Reading from the N-terminus, the 1384-residue chain is DNA-directed RNA polymerase subunit beta (1384 aa).

Belongs to the RNA polymerase beta chain family. In terms of assembly, the RNAP catalytic core consists of 2 alpha, 1 beta, 1 beta' and 1 omega subunit. When a sigma factor is associated with the core the holoenzyme is formed, which can initiate transcription.

It catalyses the reaction RNA(n) + a ribonucleoside 5'-triphosphate = RNA(n+1) + diphosphate. DNA-dependent RNA polymerase catalyzes the transcription of DNA into RNA using the four ribonucleoside triphosphates as substrates. The protein is DNA-directed RNA polymerase subunit beta of Xylella fastidiosa (strain M12).